Consider the following 193-residue polypeptide: Putative RING finger protein ORF38 (193 aa).

The RING-type zinc-finger motif lies at 12 to 50; the sequence is CCICLDDEDVDRDNTIPCRHTVCRTCYVKPMLDQCPVCR.

The protein is Putative RING finger protein ORF38 of Magallana gigas (Pacific oyster).